The following is a 284-amino-acid chain: Hypoxanthine-guanine phosphoribosyltransferase (284 aa).

Residues Lys129, 194–202 (EDIIDTGKT), Lys226, and Asp253 each bind GMP. The active-site Proton acceptor is the Asp198. Asp253 contacts Mg(2+).

The protein belongs to the purine/pyrimidine phosphoribosyltransferase family. As to quaternary structure, homotetramer. Mg(2+) serves as cofactor.

It is found in the cytoplasm. It carries out the reaction IMP + diphosphate = hypoxanthine + 5-phospho-alpha-D-ribose 1-diphosphate. It catalyses the reaction GMP + diphosphate = guanine + 5-phospho-alpha-D-ribose 1-diphosphate. It participates in purine metabolism; IMP biosynthesis via salvage pathway; IMP from hypoxanthine: step 1/1. Functionally, converts guanine to guanosine monophosphate, and hypoxanthine to inosine monophosphate. Transfers the 5-phosphoribosyl group from 5-phosphoribosylpyrophosphate onto the purine. Plays a central role in the generation of purine nucleotides through the purine salvage pathway. The polypeptide is Hypoxanthine-guanine phosphoribosyltransferase (HGPRT) (Schistosoma mansoni (Blood fluke)).